A 318-amino-acid chain; its full sequence is tRNA uridine(34) hydroxylase (318 aa).

In terms of domain architecture, Rhodanese spans 123-217 (EDDDTVIIDA…YGKDPETKGE (95 aa)). The Cysteine persulfide intermediate role is filled by Cys-177.

It belongs to the TrhO family.

It carries out the reaction uridine(34) in tRNA + AH2 + O2 = 5-hydroxyuridine(34) in tRNA + A + H2O. Its function is as follows. Catalyzes oxygen-dependent 5-hydroxyuridine (ho5U) modification at position 34 in tRNAs. This chain is tRNA uridine(34) hydroxylase, found in Staphylococcus aureus (strain MSSA476).